The primary structure comprises 461 residues: Ubiquinone hydroxylase UbiM (461 aa).

The protein belongs to the UbiH/COQ6 family. The cofactor is FAD.

It catalyses the reaction a 2-(all-trans-polyprenyl)phenol + NADPH + O2 + H(+) = a 3-(all-trans-polyprenyl)benzene-1,2-diol + NADP(+) + H2O. It carries out the reaction a 5-methoxy-2-methyl-3-(all-trans-polyprenyl)benzene-1,4-diol + AH2 + O2 = a 3-demethylubiquinol + A + H2O. It participates in cofactor biosynthesis; ubiquinone biosynthesis. Its function is as follows. Catalyzes the hydroxylation of three positions of the aromatic ring during ubiquinone biosynthesis. The chain is Ubiquinone hydroxylase UbiM from Neisseria meningitidis serogroup C / serotype 2a (strain ATCC 700532 / DSM 15464 / FAM18).